The sequence spans 598 residues: Aspartate--tRNA(Asp/Asn) ligase (598 aa).

Glutamate 182 is a binding site for L-aspartate. Residues 206 to 209 (QIFK) form an aspartate region. Position 228 (arginine 228) interacts with L-aspartate. ATP is bound by residues 228–230 (RDE) and glutamine 237. L-aspartate is bound at residue histidine 456. Glutamate 490 lines the ATP pocket. Residue arginine 497 coordinates L-aspartate. Residue 542-545 (GLDR) coordinates ATP.

Belongs to the class-II aminoacyl-tRNA synthetase family. Type 1 subfamily. Homodimer.

It localises to the cytoplasm. The catalysed reaction is tRNA(Asx) + L-aspartate + ATP = L-aspartyl-tRNA(Asx) + AMP + diphosphate. Functionally, aspartyl-tRNA synthetase with relaxed tRNA specificity since it is able to aspartylate not only its cognate tRNA(Asp) but also tRNA(Asn). Reaction proceeds in two steps: L-aspartate is first activated by ATP to form Asp-AMP and then transferred to the acceptor end of tRNA(Asp/Asn). This Lachnoclostridium phytofermentans (strain ATCC 700394 / DSM 18823 / ISDg) (Clostridium phytofermentans) protein is Aspartate--tRNA(Asp/Asn) ligase.